The sequence spans 677 residues: MDAYEATKVVFSRIQALDPDHAAKIMGLLLIQDHGDKEMIRLAFGPEALLHSVMAQARKELALLPPPQAASSSPTVPAAHSPFLLSRQNSGRCPAPSPSSWAQAQPFSRSNSMGNGGAADEMVGAGEELMSPLNGGGGAAANAPPFFPRGGDALLDDFELQEQLAFLHDGAGGVNPGHALQAFDGAECRSPGPGESGGMLPYGLAWANGGPGHRRSASVNELCLGGDGFGWKPCLYYARGFCKNGSTCRFVHGGLSDDAAMDATTAEQQQCQDFLLRSKSQRLGPAAFPFTPTGSLPASPSATSKCLSLLLQQQQQHNDNQRAAAAALMLAGGDEAHKFMGRPRLDRVDFASMMNPGSRQIYLTFPADSTFREEDVSNYFSIYGPVHDVRIPYQQKRMFGFVTFVYPETVKLILAKGNPHFICDARVLVKPYKEKGKVPDKYRKQQQGDFCCMSPTGLDARDPFDFHQLGARMLQHSNSANELMLRRKLEEQQQAAELQQAIDLHSRRLIGLQLLDLKSSAAVHAAETTTMSLPTPITNAFTSGQPGATTIVESPPSSTGQLMASCGSPSEGKVVNGGNKADSAGEVTRNADSDQSGEHNLPDSPFASSTKSTAFFTATAATAIGSEGDFTTGSSCNIGGSAVGSANPLRPPTLDIPSPRTCFFPMPRLSEHGAIGM.

The segment at 66 to 117 is disordered; sequence PPQAASSSPTVPAAHSPFLLSRQNSGRCPAPSPSSWAQAQPFSRSNSMGNGG. Over residues 69–82 the composition is skewed to low complexity; sequence AASSSPTVPAAHSP. The segment covering 98-113 has biased composition (polar residues); it reads PSSWAQAQPFSRSNSM. The C3H1-type zinc-finger motif lies at 228 to 255; the sequence is GFGWKPCLYYARGFCKNGSTCRFVHGGL. The RRM domain occupies 359–435; sequence RQIYLTFPAD…RVLVKPYKEK (77 aa). Positions 480-513 form a coiled coil; sequence ANELMLRRKLEEQQQAAELQQAIDLHSRRLIGLQ. Residues 535-562 show a composition bias toward polar residues; sequence TPITNAFTSGQPGATTIVESPPSSTGQL. Positions 535–607 are disordered; it reads TPITNAFTSG…EHNLPDSPFA (73 aa). Residues 589–601 show a composition bias toward basic and acidic residues; sequence RNADSDQSGEHNL.

In Oryza sativa subsp. japonica (Rice), this protein is Zinc finger CCCH domain-containing protein 23.